We begin with the raw amino-acid sequence, 609 residues long: Probable ubiquitin-conjugating enzyme E2 25 (609 aa).

Disordered regions lie at residues 70–99 (EEDE…LDPE) and 151–185 (ADKE…SQFS). Positions 156-178 (ASSSKSSHANNGNNSSKKATKAS) are enriched in low complexity. A UBC core domain is found at 332–492 (DWAKRIQDEW…TFILSLKTMV (161 aa)). Residue Cys-418 is the Glycyl thioester intermediate of the active site.

This sequence belongs to the ubiquitin-conjugating enzyme family. As to expression, expressed in seeds, pistils, siliques, hypocotyls and leaves.

The enzyme catalyses S-ubiquitinyl-[E1 ubiquitin-activating enzyme]-L-cysteine + [E2 ubiquitin-conjugating enzyme]-L-cysteine = [E1 ubiquitin-activating enzyme]-L-cysteine + S-ubiquitinyl-[E2 ubiquitin-conjugating enzyme]-L-cysteine.. It functions in the pathway protein modification; protein ubiquitination. Its function is as follows. Accepts the ubiquitin from the E1 complex and catalyzes its covalent attachment to other proteins. The polypeptide is Probable ubiquitin-conjugating enzyme E2 25 (UBC25) (Arabidopsis thaliana (Mouse-ear cress)).